We begin with the raw amino-acid sequence, 192 residues long: Fe/S biogenesis protein NfuA (192 aa).

[4Fe-4S] cluster contacts are provided by Cys-150 and Cys-153.

This sequence belongs to the NfuA family. As to quaternary structure, homodimer. It depends on [4Fe-4S] cluster as a cofactor.

Functionally, involved in iron-sulfur cluster biogenesis. Binds a 4Fe-4S cluster, can transfer this cluster to apoproteins, and thereby intervenes in the maturation of Fe/S proteins. Could also act as a scaffold/chaperone for damaged Fe/S proteins. This Vesicomyosocius okutanii subsp. Calyptogena okutanii (strain HA) protein is Fe/S biogenesis protein NfuA.